The chain runs to 103 residues: Flagellar hook-basal body complex protein FliE (103 aa).

Belongs to the FliE family.

It is found in the bacterial flagellum basal body. In Cronobacter sakazakii (strain ATCC BAA-894) (Enterobacter sakazakii), this protein is Flagellar hook-basal body complex protein FliE.